Consider the following 330-residue polypeptide: Methionyl-tRNA formyltransferase (330 aa).

Residue 121 to 124 (SLLP) coordinates (6S)-5,6,7,8-tetrahydrofolate.

It belongs to the Fmt family.

The enzyme catalyses L-methionyl-tRNA(fMet) + (6R)-10-formyltetrahydrofolate = N-formyl-L-methionyl-tRNA(fMet) + (6S)-5,6,7,8-tetrahydrofolate + H(+). Attaches a formyl group to the free amino group of methionyl-tRNA(fMet). The formyl group appears to play a dual role in the initiator identity of N-formylmethionyl-tRNA by promoting its recognition by IF2 and preventing the misappropriation of this tRNA by the elongation apparatus. This chain is Methionyl-tRNA formyltransferase, found in Burkholderia cenocepacia (strain ATCC BAA-245 / DSM 16553 / LMG 16656 / NCTC 13227 / J2315 / CF5610) (Burkholderia cepacia (strain J2315)).